A 95-amino-acid polypeptide reads, in one-letter code: Aspartyl/glutamyl-tRNA(Asn/Gln) amidotransferase subunit C (95 aa).

The protein belongs to the GatC family. In terms of assembly, heterotrimer of A, B and C subunits.

It carries out the reaction L-glutamyl-tRNA(Gln) + L-glutamine + ATP + H2O = L-glutaminyl-tRNA(Gln) + L-glutamate + ADP + phosphate + H(+). The enzyme catalyses L-aspartyl-tRNA(Asn) + L-glutamine + ATP + H2O = L-asparaginyl-tRNA(Asn) + L-glutamate + ADP + phosphate + 2 H(+). In terms of biological role, allows the formation of correctly charged Asn-tRNA(Asn) or Gln-tRNA(Gln) through the transamidation of misacylated Asp-tRNA(Asn) or Glu-tRNA(Gln) in organisms which lack either or both of asparaginyl-tRNA or glutaminyl-tRNA synthetases. The reaction takes place in the presence of glutamine and ATP through an activated phospho-Asp-tRNA(Asn) or phospho-Glu-tRNA(Gln). This is Aspartyl/glutamyl-tRNA(Asn/Gln) amidotransferase subunit C from Nitrosospira multiformis (strain ATCC 25196 / NCIMB 11849 / C 71).